The sequence spans 189 residues: Probable chorismate pyruvate-lyase (189 aa).

The substrate site is built by arginine 74, leucine 113, and glutamate 175.

This sequence belongs to the UbiC family.

Its subcellular location is the cytoplasm. The enzyme catalyses chorismate = 4-hydroxybenzoate + pyruvate. It participates in cofactor biosynthesis; ubiquinone biosynthesis. Its function is as follows. Removes the pyruvyl group from chorismate, with concomitant aromatization of the ring, to provide 4-hydroxybenzoate (4HB) for the ubiquinone pathway. This is Probable chorismate pyruvate-lyase from Azoarcus sp. (strain BH72).